The primary structure comprises 714 residues: Fatty acid oxidation complex subunit alpha (714 aa).

Residues 1–190 (MEMASAFTLN…KLGLVDDVVP (190 aa)) form an enoyl-CoA hydratase region. Residues 306-714 (APLNSVGILG…FWKTTATDLQ (409 aa)) are 3-hydroxyacyl-CoA dehydrogenase.

It in the N-terminal section; belongs to the enoyl-CoA hydratase/isomerase family. This sequence in the central section; belongs to the 3-hydroxyacyl-CoA dehydrogenase family. In terms of assembly, heterotetramer of two alpha chains (FadJ) and two beta chains (FadI).

It is found in the cytoplasm. It catalyses the reaction a (3S)-3-hydroxyacyl-CoA = a (2E)-enoyl-CoA + H2O. It carries out the reaction a 4-saturated-(3S)-3-hydroxyacyl-CoA = a (3E)-enoyl-CoA + H2O. The catalysed reaction is a (3S)-3-hydroxyacyl-CoA + NAD(+) = a 3-oxoacyl-CoA + NADH + H(+). The enzyme catalyses (3S)-3-hydroxybutanoyl-CoA = (3R)-3-hydroxybutanoyl-CoA. It participates in lipid metabolism; fatty acid beta-oxidation. In terms of biological role, catalyzes the formation of a hydroxyacyl-CoA by addition of water on enoyl-CoA. Also exhibits 3-hydroxyacyl-CoA epimerase and 3-hydroxyacyl-CoA dehydrogenase activities. The polypeptide is Fatty acid oxidation complex subunit alpha (Escherichia coli O17:K52:H18 (strain UMN026 / ExPEC)).